The following is a 447-amino-acid chain: N-succinylarginine dihydrolase (447 aa).

Substrate-binding positions include 19–28 (AGLSFGNEAS), Asn110, and 137–138 (HR). Glu174 is a catalytic residue. Arg212 provides a ligand contact to substrate. His248 is an active-site residue. Substrate-binding residues include Asp250 and Asn359. The active-site Nucleophile is the Cys365.

The protein belongs to the succinylarginine dihydrolase family. In terms of assembly, homodimer.

It carries out the reaction N(2)-succinyl-L-arginine + 2 H2O + 2 H(+) = N(2)-succinyl-L-ornithine + 2 NH4(+) + CO2. It participates in amino-acid degradation; L-arginine degradation via AST pathway; L-glutamate and succinate from L-arginine: step 2/5. In terms of biological role, catalyzes the hydrolysis of N(2)-succinylarginine into N(2)-succinylornithine, ammonia and CO(2). This Shigella boydii serotype 4 (strain Sb227) protein is N-succinylarginine dihydrolase.